We begin with the raw amino-acid sequence, 363 residues long: Pyrimidine monooxygenase RutA (363 aa).

FMN is bound by residues 49–50 (IK), Asn-115, Glu-124, 140–141 (RY), and Ser-190.

Belongs to the NtaA/SnaA/DszA monooxygenase family. RutA subfamily.

The catalysed reaction is uracil + FMNH2 + NADH + O2 = (Z)-3-ureidoacrylate + FMN + NAD(+) + H2O + H(+). It catalyses the reaction thymine + FMNH2 + NADH + O2 = (Z)-2-methylureidoacrylate + FMN + NAD(+) + H2O + H(+). Functionally, catalyzes the pyrimidine ring opening between N-3 and C-4 by an unusual flavin hydroperoxide-catalyzed mechanism, adding oxygen atoms in the process to yield ureidoacrylate peracid, that immediately reacts with FMN forming ureidoacrylate and FMN-N(5)-oxide. The FMN-N(5)-oxide reacts spontaneously with NADH to produce FMN. Requires the flavin reductase RutF to regenerate FMN in vivo. This Pantoea ananatis (strain LMG 20103) protein is Pyrimidine monooxygenase RutA.